A 420-amino-acid polypeptide reads, in one-letter code: Phosphoribosylamine--glycine ligase (420 aa).

Positions 108 to 314 (KEIMVKYGVS…FAQNITDILD (207 aa)) constitute an ATP-grasp domain. 134-195 (IEKHGAPIVV…EEFLEGEEFS (62 aa)) lines the ATP pocket. Residues glutamate 284 and asparagine 286 each coordinate Mg(2+).

It belongs to the GARS family. It depends on Mg(2+) as a cofactor. Mn(2+) serves as cofactor.

It catalyses the reaction 5-phospho-beta-D-ribosylamine + glycine + ATP = N(1)-(5-phospho-beta-D-ribosyl)glycinamide + ADP + phosphate + H(+). It functions in the pathway purine metabolism; IMP biosynthesis via de novo pathway; N(1)-(5-phospho-D-ribosyl)glycinamide from 5-phospho-alpha-D-ribose 1-diphosphate: step 2/2. This chain is Phosphoribosylamine--glycine ligase, found in Streptococcus pneumoniae (strain ATCC BAA-255 / R6).